Here is a 190-residue protein sequence, read N- to C-terminus: RNA pyrophosphohydrolase (190 aa).

Residues 6-149 enclose the Nudix hydrolase domain; it reads GYRPNVGIVL…KRSVYARALC (144 aa). A Nudix box motif is present at residues 38–59; that stretch reads GGMHSDETPVEAMYRELNEETG.

This sequence belongs to the Nudix hydrolase family. RppH subfamily. It depends on a divalent metal cation as a cofactor.

In terms of biological role, accelerates the degradation of transcripts by removing pyrophosphate from the 5'-end of triphosphorylated RNA, leading to a more labile monophosphorylated state that can stimulate subsequent ribonuclease cleavage. This is RNA pyrophosphohydrolase from Xylella fastidiosa (strain Temecula1 / ATCC 700964).